A 679-amino-acid chain; its full sequence is Leucine-rich repeat, immunoglobulin-like domain and transmembrane domain-containing protein 3 (679 aa).

The first 19 residues, 1–19, serve as a signal peptide directing secretion; that stretch reads MHLFACLCIVLSFLEGVGC. Topologically, residues 20 to 582 are lumenal; it reads LCPSQCTCDY…RVEGDDSQWS (563 aa). LRR repeat units follow at residues 56 to 79, 80 to 103, 104 to 128, 129 to 151, and 152 to 175; these read PVDTVKLRIEKTVIRRISAEAFYY, LVELQYLWVTYNSVASIDPSSFYN, LKQLHELRLDGNSLAAFPWASLLDM, PLLRTLDLHNNKITSVPNEALRY, and LKNLAYLDLSSNRLTTLPPDFLES. Positions 201-253 constitute an LRRCT domain; that stretch reads NPWFCDCHISKMIELSKVVDPAIVLLDPLMTCSEPERLTGILFQRAELEHCLK. The region spanning 254-344 is the Ig-like domain; it reads PSVMTSATKI…GMSEAVVTVT (91 aa). A disulfide bridge connects residues C275 and C328. Residue N296 is glycosylated (N-linked (GlcNAc...) asparagine). The tract at residues 351–375 is disordered; that stretch reads TPIPPDTSERTGDHPEWDVQPGSGR. Over residues 357–367 the composition is skewed to basic and acidic residues; sequence TSERTGDHPEW. A Fibronectin type-III domain is found at 486 to 574; sequence AIENLRVVSE…QCITFSTERV (89 aa). The chain crosses the membrane as a helical span at residues 583–603; sequence LLLVVTSTACVVILPLICFLL. Over 604–679 the chain is Cytoplasmic; that stretch reads YKVCKLQCKS…SEGSRPEYYC (76 aa).

Glycosylated. As to expression, detected in the outer plexiform layer (OPL) of the retina where it localizes to ON-bipolar cells (at protein level).

Its subcellular location is the cell projection. It localises to the dendrite. The protein localises to the perikaryon. The protein resides in the endoplasmic reticulum membrane. Functionally, plays a role in the synapse formation and synaptic transmission between cone photoreceptor cells and retinal bipolar cells. Required for normal transmission of a light-evoked stimulus from the cone photoreceptor cells to the ON-bipolar cells and ON-ganglion cells in the inner retina. Required in retinal ON-bipolar cells for normal localization of the cation channel TRPM1 at dendrite tips. Seems to play a specific role in synaptic contacts made by ON-bipolar cells with cone photoreceptor pedicles. May also have a role in cone synapse formation. Might facilitate FGFR1 exit from the endoplasmic reticulum to the Golgi. Could be a regulator of the FGFRs. The protein is Leucine-rich repeat, immunoglobulin-like domain and transmembrane domain-containing protein 3 (LRIT3) of Homo sapiens (Human).